Reading from the N-terminus, the 452-residue chain is Cell division protein FtsZ (452 aa).

GTP contacts are provided by residues 24–28, 111–113, E142, R146, and D190; these read GAGSN and GTG. The segment at 432 to 452 is disordered; it reads DQDNKESDIHDIPAFLRKKRD. The span at 433–442 shows a compositional bias: basic and acidic residues; the sequence is QDNKESDIHD.

Belongs to the FtsZ family. Homodimer. Polymerizes to form a dynamic ring structure in a strictly GTP-dependent manner. Interacts directly with several other division proteins.

The protein resides in the cytoplasm. Functionally, essential cell division protein that forms a contractile ring structure (Z ring) at the future cell division site. The regulation of the ring assembly controls the timing and the location of cell division. One of the functions of the FtsZ ring is to recruit other cell division proteins to the septum to produce a new cell wall between the dividing cells. Binds GTP and shows GTPase activity. This is Cell division protein FtsZ from Rickettsia conorii (strain ATCC VR-613 / Malish 7).